Here is a 380-residue protein sequence, read N- to C-terminus: PqqA peptide cyclase (380 aa).

Residues 8–223 (VNPPLWLLAE…VADYRQKMAA (216 aa)) enclose the Radical SAM core domain. 3 residues coordinate [4Fe-4S] cluster: cysteine 22, cysteine 26, and cysteine 29.

Belongs to the radical SAM superfamily. PqqE family. In terms of assembly, interacts with PqqD. The interaction is necessary for activity of PqqE. The cofactor is [4Fe-4S] cluster.

It catalyses the reaction [PQQ precursor protein] + S-adenosyl-L-methionine = E-Y cross-linked-[PQQ precursor protein] + 5'-deoxyadenosine + L-methionine + H(+). The protein operates within cofactor biosynthesis; pyrroloquinoline quinone biosynthesis. Its function is as follows. Catalyzes the cross-linking of a glutamate residue and a tyrosine residue in the PqqA protein as part of the biosynthesis of pyrroloquinoline quinone (PQQ). The polypeptide is PqqA peptide cyclase (Klebsiella pneumoniae (strain 342)).